The primary structure comprises 318 residues: Small ribosomal subunit biogenesis GTPase RsgA (318 aa).

Residues 82–246 (RQDEIRTKSF…LIDSPGFQEF (165 aa)) form the CP-type G domain. Residues 132–135 (NKSD) and 186–194 (GPSGAGKST) each bind GTP. Zn(2+) is bound by residues cysteine 270, cysteine 275, histidine 277, and cysteine 283.

The protein belongs to the TRAFAC class YlqF/YawG GTPase family. RsgA subfamily. Monomer. Associates with 30S ribosomal subunit, binds 16S rRNA. Zn(2+) is required as a cofactor.

The protein localises to the cytoplasm. Functionally, one of several proteins that assist in the late maturation steps of the functional core of the 30S ribosomal subunit. Helps release RbfA from mature subunits. May play a role in the assembly of ribosomal proteins into the subunit. Circularly permuted GTPase that catalyzes slow GTP hydrolysis, GTPase activity is stimulated by the 30S ribosomal subunit. The polypeptide is Small ribosomal subunit biogenesis GTPase RsgA (Variovorax paradoxus (strain S110)).